Consider the following 102-residue polypeptide: Small ribosomal subunit protein uS10 (102 aa).

Belongs to the universal ribosomal protein uS10 family. Part of the 30S ribosomal subunit.

Involved in the binding of tRNA to the ribosomes. The chain is Small ribosomal subunit protein uS10 from Streptococcus mutans serotype c (strain ATCC 700610 / UA159).